A 572-amino-acid polypeptide reads, in one-letter code: Flagellin A (572 aa).

This sequence belongs to the bacterial flagellin family. In terms of assembly, heteromer of FlaA and FlaB. Interacts with FliW.

The protein resides in the secreted. It localises to the bacterial flagellum. In terms of biological role, flagellin is the subunit protein which polymerizes to form the filaments of bacterial flagella. FlaA binds to flagellar assembly factor FliW protein, preventing FliW from binding to CsrA, so that CsrA can then bind flaA mRNA and represses its translation. This Campylobacter jejuni subsp. jejuni serotype O:2 (strain ATCC 700819 / NCTC 11168) protein is Flagellin A (flaA).